A 397-amino-acid polypeptide reads, in one-letter code: Probable peptidoglycan glycosyltransferase FtsW (397 aa).

Over 1–30 the chain is Cytoplasmic; that stretch reads MYGLEMLEKIKLEYDKWACLTPKNSLYDRT. A helical membrane pass occupies residues 31-51; that stretch reads LVWLFLSLLMIGFIMVTSASI. The Periplasmic portion of the chain corresponds to 52–61; it reads PVSTRLNNDP. The helical transmembrane segment at 62–82 threads the bilayer; it reads FHFAIRDSIYLACSLLAFAFV. Residues 83–94 lie on the Cytoplasmic side of the membrane; it reads VKIPMRNWEKYN. Residues 95-115 traverse the membrane as a helical segment; sequence VPLFLLSLLFLASVLIFGRSV. Topologically, residues 116 to 126 are periplasmic; sequence NGSIRWIQLGP. The helical transmembrane segment at 127–146 threads the bilayer; it reads INFQPAELSKLAIICYFSSF. Over 147–158 the chain is Cytoplasmic; the sequence is YVRKYDEMRNRS. The next 2 membrane-spanning stretches (helical) occupy residues 159 to 179 and 180 to 200; these read ASVIRPMVILFLFSSLLLLQP and DLGSVVVLFVLTFTMLFIMGA. Position 201 (Lys201) is a topological domain, cytoplasmic. A helical transmembrane segment spans residues 202–222; sequence VMQFLLLIVTASVSFILLVLT. At 223 to 280 the chain is on the periplasmic side; the sequence is SEYRLKRVTSFLDPFADAYGDGFQLSNAQMAFGQGQLWGQGLGNSVQKLEYLPEAHTD. A helical transmembrane segment spans residues 281 to 301; that stretch reads FVMAVVAEEFGFIGIIFMVVL. Residues 302-325 lie on the Cytoplasmic side of the membrane; sequence LLCLSFRAIKISRDALKLEARFRG. The helical transmembrane segment at 326–346 threads the bilayer; the sequence is FFAFGVAIWVFLQGSVNLGVA. Over 347-356 the chain is Periplasmic; sequence SGALPTKGLT. The chain crosses the membrane as a helical span at residues 357–377; it reads FPLVSYGGSSLVIMSVAIAIL. Residues 378-397 are Cytoplasmic-facing; it reads LRIDYENRLTRVGHAQIKEP.

It belongs to the SEDS family. FtsW subfamily.

It localises to the cell inner membrane. The enzyme catalyses [GlcNAc-(1-&gt;4)-Mur2Ac(oyl-L-Ala-gamma-D-Glu-L-Lys-D-Ala-D-Ala)](n)-di-trans,octa-cis-undecaprenyl diphosphate + beta-D-GlcNAc-(1-&gt;4)-Mur2Ac(oyl-L-Ala-gamma-D-Glu-L-Lys-D-Ala-D-Ala)-di-trans,octa-cis-undecaprenyl diphosphate = [GlcNAc-(1-&gt;4)-Mur2Ac(oyl-L-Ala-gamma-D-Glu-L-Lys-D-Ala-D-Ala)](n+1)-di-trans,octa-cis-undecaprenyl diphosphate + di-trans,octa-cis-undecaprenyl diphosphate + H(+). It functions in the pathway cell wall biogenesis; peptidoglycan biosynthesis. Its function is as follows. Peptidoglycan polymerase that is essential for cell division. The polypeptide is Probable peptidoglycan glycosyltransferase FtsW (Haemophilus ducreyi (strain 35000HP / ATCC 700724)).